Here is a 710-residue protein sequence, read N- to C-terminus: Lactotransferrin (710 aa).

The signal sequence occupies residues Met1 to Ala19. Phe10 is subject to Phosphoserine; alternate. O-linked (GlcNAc) serine; alternate glycosylation is present at Phe10. The segment at Gly20–Ser24 is critical for glycosaminoglycan, lipid A, lysozyme and DNA binding. 2 bactericidal and antifungal activity regions span residues Gly20–Ala29 and Phe39–Arg49. Positions Arg21–Arg22 are important for full bactericidal and antifungal activities. 2 Transferrin-like domains span residues Val25–Lys352 and Val364–Lys695. Intrachain disulfides connect Cys28/Cys64 and Cys38/Cys55. 2 interaction with PspA regions span residues Phe39–Arg46 and Lys57–Arg58. The segment at Phe39 to Arg49 is interaction with lipopolysaccharide. Positions Arg46–Pro51 are involved in glycosaminoglycan binding. Position 79 (Asp79) interacts with Fe(3+). Residue Lys92 is part of the active site. Tyr111 contacts Fe(3+). 4 disulfides stabilise this stretch: Cys134/Cys217, Cys176/Cys192, Cys189/Cys200, and Cys250/Cys264. Hydrogencarbonate contacts are provided by Thr136, Arg140, Ala142, and Gly143. Asn156 carries N-linked (GlcNAc...) asparagine glycosylation. Tyr211 serves as a coordination point for Fe(3+). Position 272 (His272) interacts with Fe(3+). The Nucleophile role is filled by Ser278. Cystine bridges form between Cys367/Cys399 and Cys377/Cys390. Glycyl lysine isopeptide (Lys-Gly) (interchain with G-Cter in ubiquitin) cross-links involve residues Gln379 and Ser391. Fe(3+)-binding residues include Asp414 and Tyr454. Intrachain disulfides connect Cys424–Cys705, Cys446–Cys668, Cys478–Cys553, Cys502–Cys696, Cys512–Cys526, Cys523–Cys536, Cys594–Cys608, and Cys646–Cys651. Hydrogencarbonate contacts are provided by Thr480, Arg484, Ala486, and Gly487. The N-linked (GlcNAc...) asparagine glycan is linked to Asn497. Tyr547 provides a ligand contact to Fe(3+). Residue His616 participates in Fe(3+) binding. A glycan (N-linked (GlcNAc...) asparagine) is linked at Asn642.

This sequence belongs to the transferrin family. Monomer. Found in a complex with LTF, CLU, EPPIN and SEMG1. Found in a complex with MPO and LTF; interacts directly with CP, allows Fe(3+) incorporation into LTF and activation of CP ferroxidase activity. Phosphorylation at Ser-10 activates the transcriptional activity. Phosphorylation at Ser-10 also promotes proteasomal degradation. Alternatively can undergo O-GlcNAcylation at Ser-10. Post-translationally, O-GlcNAcylation at Ser-10 inhibits DNA binding and negatively regulates the transcriptional activity. Alternatively can undergo phosphorylation at Ser-10. In terms of processing, poly-N-acetyllactosaminic carbohydrate moiety seems to be needed for TLR4 activation. As to expression, high levels are found in saliva and tears, intermediate levels in serum and plasma, and low levels in urine. In kidney, detected in the distal collecting tubules in the medulla but not in the cortical region or in blood vessels. Detected in peripheral blood neutrophils (at protein level). Isoform 1 and isoform DeltaLf are expressed in breast, prostate, spleen, pancreas, kidney, small intestine, lung, skeletal muscle, uterus, thymus and fetal liver. Isoform 1 is expressed in brain, testis and peripheral blood leukocytes; isoform DeltaLf is barely detectable in these tissues. Isoform DeltaLf is expressed in placenta, liver and ovary; isoform 1 is barely detectable in these tissues. In kidney, isoform 1 is expressed at high levels in the collecting tubules of the medulla but at very low levels in the cortex.

Its subcellular location is the secreted. The protein resides in the cytoplasmic granule. The protein localises to the cytoplasm. It is found in the nucleus. Functionally, transferrins are iron binding transport proteins which can bind two Fe(3+) ions in association with the binding of an anion, usually bicarbonate. Major iron-binding and multifunctional protein found in exocrine fluids such as breast milk and mucosal secretions. Has antimicrobial activity, which depends on the extracellular cation concentration. Antimicrobial properties include bacteriostasis, which is related to its ability to sequester free iron and thus inhibit microbial growth, as well as direct bactericidal properties leading to the release of lipopolysaccharides from the bacterial outer membrane. Can also prevent bacterial biofilm development in P.aeruginosa infection. Has weak antifungal activity against C.albicans. Has anabolic, differentiating and anti-apoptotic effects on osteoblasts and can also inhibit osteoclastogenesis, possibly playing a role in the regulation of bone growth. Promotes binding of species C adenoviruses to epithelial cells, promoting adenovirus infection. Can inhibit papillomavirus infections. Stimulates the TLR4 signaling pathway leading to NF-kappa-B activation and subsequent pro-inflammatory cytokine production while also interfering with the lipopolysaccharide (LPS)-stimulated TLR4 signaling. Inhibits neutrophil granulocyte migration to sites of apoptosis, when secreted by apoptotic cells. Stimulates VEGFA-mediated endothelial cell migration and proliferation. Binds heparin, chondroitin sulfate and possibly other glycosaminoglycans (GAGs). Also binds specifically to pneumococcal surface protein A (PspA), the lipid A portion of bacterial lipopolysaccharide (LPS), lysozyme and DNA. In terms of biological role, lactoferricin binds to the bacterial surface and is crucial for the bactericidal functions. Has some antiviral activity against papillomavirus infection. N-terminal region shows strong antifungal activity against C.albicans. Contains two BBXB heparin-binding consensus sequences that appear to form the predominate functional GAG-binding site. Its function is as follows. Has antimicrobial activity and is able to permeabilize different ions through liposomal membranes. Functionally, has opioid antagonist activity. Shows preference for mu-receptor. Has opioid antagonist activity. Shows higher degrees of preference for kappa-receptors than for mu-receptors. In terms of biological role, the lactotransferrin transferrin-like domain 1 functions as a serine protease of the peptidase S60 family that cuts arginine rich regions. This function contributes to the antimicrobial activity. Shows a preferential cleavage at -Arg-Ser-Arg-Arg-|- and -Arg-Arg-Ser-Arg-|-, and of Z-Phe-Arg-|-aminomethylcoumarin sites. Its function is as follows. Transcription factor with antiproliferative properties and ability to induce cell cycle arrest. Binds to the DeltaLf response element found in the SKP1, BAX, DCPS, and SELENOH promoters. The protein is Lactotransferrin of Homo sapiens (Human).